The primary structure comprises 478 residues: Cytochrome c-552 (478 aa).

Residues 1–26 (MARTILRARRFFSLILPFFFISSVYA) form the signal peptide. H94 serves as a coordination point for heme c. The heme site is built by C122, C125, and K126. The heme c site is built by C160, C163, H164, C209, C212, and H213. E215, Y216, K261, and Q263 together coordinate Ca(2+). A substrate-binding site is contributed by Y216. A substrate-binding site is contributed by H264. Residues H275, C282, C285, H286, H301, C314, C317, H318, and H393 each contribute to the heme c site.

The protein belongs to the cytochrome c-552 family. It depends on Ca(2+) as a cofactor. Requires heme c as cofactor.

It is found in the periplasm. It catalyses the reaction 6 Fe(III)-[cytochrome c] + NH4(+) + 2 H2O = 6 Fe(II)-[cytochrome c] + nitrite + 8 H(+). It functions in the pathway nitrogen metabolism; nitrate reduction (assimilation). In terms of biological role, catalyzes the reduction of nitrite to ammonia, consuming six electrons in the process. The protein is Cytochrome c-552 of Citrobacter koseri (strain ATCC BAA-895 / CDC 4225-83 / SGSC4696).